Here is a 398-residue protein sequence, read N- to C-terminus: Dual-specificity RNA methyltransferase RlmN (398 aa).

The active-site Proton acceptor is Glu119. The 240-residue stretch at 125 to 364 (EADRATLCVS…TIVRKTRGDD (240 aa)) folds into the Radical SAM core domain. Cys132 and Cys369 are joined by a disulfide. The [4Fe-4S] cluster site is built by Cys139, Cys143, and Cys146. S-adenosyl-L-methionine-binding positions include 193–194 (GE), Ser225, 247–249 (SLH), and Asn326. Cys369 functions as the S-methylcysteine intermediate in the catalytic mechanism.

Belongs to the radical SAM superfamily. RlmN family. The cofactor is [4Fe-4S] cluster.

It localises to the cytoplasm. The catalysed reaction is adenosine(2503) in 23S rRNA + 2 reduced [2Fe-2S]-[ferredoxin] + 2 S-adenosyl-L-methionine = 2-methyladenosine(2503) in 23S rRNA + 5'-deoxyadenosine + L-methionine + 2 oxidized [2Fe-2S]-[ferredoxin] + S-adenosyl-L-homocysteine. It catalyses the reaction adenosine(37) in tRNA + 2 reduced [2Fe-2S]-[ferredoxin] + 2 S-adenosyl-L-methionine = 2-methyladenosine(37) in tRNA + 5'-deoxyadenosine + L-methionine + 2 oxidized [2Fe-2S]-[ferredoxin] + S-adenosyl-L-homocysteine. In terms of biological role, specifically methylates position 2 of adenine 2503 in 23S rRNA and position 2 of adenine 37 in tRNAs. m2A2503 modification seems to play a crucial role in the proofreading step occurring at the peptidyl transferase center and thus would serve to optimize ribosomal fidelity. The chain is Dual-specificity RNA methyltransferase RlmN from Yersinia pseudotuberculosis serotype IB (strain PB1/+).